The primary structure comprises 451 residues: Probable multidrug resistance protein NorM (451 aa).

Helical transmembrane passes span 44–66 (IAAI…GLLL), 92–109 (YWLA…LWNS), 130–147 (YIRI…FQVI), 162–179 (VIGL…YTLI), 186–208 (FNYG…FIAM), 247–269 (GFPI…LLIA), 282–304 (ALNI…SIRL), 319–341 (IILS…IILF), 391–413 (IIFI…FLAL), and 423–445 (AIGF…LFRI).

The protein belongs to the multi antimicrobial extrusion (MATE) (TC 2.A.66.1) family.

The protein resides in the cell membrane. Multidrug efflux pump. The protein is Probable multidrug resistance protein NorM (norM) of Buchnera aphidicola subsp. Baizongia pistaciae (strain Bp).